The sequence spans 208 residues: N-(5'-phosphoribosyl)anthranilate isomerase (208 aa).

This sequence belongs to the TrpF family.

It carries out the reaction N-(5-phospho-beta-D-ribosyl)anthranilate = 1-(2-carboxyphenylamino)-1-deoxy-D-ribulose 5-phosphate. The protein operates within amino-acid biosynthesis; L-tryptophan biosynthesis; L-tryptophan from chorismate: step 3/5. The chain is N-(5'-phosphoribosyl)anthranilate isomerase from Desulforamulus reducens (strain ATCC BAA-1160 / DSM 100696 / MI-1) (Desulfotomaculum reducens).